Consider the following 181-residue polypeptide: ATP synthase subunit delta (181 aa).

Belongs to the ATPase delta chain family. In terms of assembly, F-type ATPases have 2 components, F(1) - the catalytic core - and F(0) - the membrane proton channel. F(1) has five subunits: alpha(3), beta(3), gamma(1), delta(1), epsilon(1). F(0) has three main subunits: a(1), b(2) and c(10-14). The alpha and beta chains form an alternating ring which encloses part of the gamma chain. F(1) is attached to F(0) by a central stalk formed by the gamma and epsilon chains, while a peripheral stalk is formed by the delta and b chains.

The protein resides in the cell membrane. Functionally, f(1)F(0) ATP synthase produces ATP from ADP in the presence of a proton or sodium gradient. F-type ATPases consist of two structural domains, F(1) containing the extramembraneous catalytic core and F(0) containing the membrane proton channel, linked together by a central stalk and a peripheral stalk. During catalysis, ATP synthesis in the catalytic domain of F(1) is coupled via a rotary mechanism of the central stalk subunits to proton translocation. In terms of biological role, this protein is part of the stalk that links CF(0) to CF(1). It either transmits conformational changes from CF(0) to CF(1) or is implicated in proton conduction. This chain is ATP synthase subunit delta, found in Clostridium kluyveri (strain NBRC 12016).